Here is a 240-residue protein sequence, read N- to C-terminus: Aliphatic sulfonates import ATP-binding protein SsuB 2 (240 aa).

An ABC transporter domain is found at 2 to 218; that stretch reads VRTRELRRGF…RHSAPEFIHA (217 aa). 34–41 serves as a coordination point for ATP; sequence GRSGSGKS.

This sequence belongs to the ABC transporter superfamily. Aliphatic sulfonates importer (TC 3.A.1.17.2) family. As to quaternary structure, the complex is composed of two ATP-binding proteins (SsuB), two transmembrane proteins (SsuC) and a solute-binding protein (SsuA).

The protein localises to the cell membrane. It catalyses the reaction ATP + H2O + aliphatic sulfonate-[sulfonate-binding protein]Side 1 = ADP + phosphate + aliphatic sulfonateSide 2 + [sulfonate-binding protein]Side 1.. Functionally, part of the ABC transporter complex SsuABC involved in aliphatic sulfonates import. Responsible for energy coupling to the transport system. The chain is Aliphatic sulfonates import ATP-binding protein SsuB 2 from Nocardia farcinica (strain IFM 10152).